The sequence spans 579 residues: Putative diflavin flavoprotein A 2 (579 aa).

The segment at 50-243 is zinc metallo-hydrolase; sequence QNGTTYNSYL…GKIKIIANGH (194 aa). Residues His-99, Glu-101, Asp-103, His-166, Asp-185, and His-243 each coordinate Fe cation. Residues 272 to 460 form the Flavodoxin-like domain; sequence VGLFYVADYG…MLASWVSQAS (189 aa). The tract at residues 461–579 is flavodoxin-reductase-like; sequence LQPLGFTIAV…VRHRKVGNYY (119 aa).

In the N-terminal section; belongs to the zinc metallo-hydrolase group 3 family. The protein in the C-terminal section; belongs to the flavodoxin reductase family. Requires Fe cation as cofactor.

In terms of biological role, mediates electron transfer from NADH to oxygen, reducing it to water. This modular protein has 3 redox cofactors, in other organisms the same activity requires 2 or 3 proteins. This chain is Putative diflavin flavoprotein A 2 (dfa2), found in Nostoc sp. (strain PCC 7120 / SAG 25.82 / UTEX 2576).